The primary structure comprises 90 residues: Probable Fe(2+)-trafficking protein (90 aa).

It belongs to the Fe(2+)-trafficking protein family.

Its function is as follows. Could be a mediator in iron transactions between iron acquisition and iron-requiring processes, such as synthesis and/or repair of Fe-S clusters in biosynthetic enzymes. The sequence is that of Probable Fe(2+)-trafficking protein from Pseudomonas fluorescens (strain ATCC BAA-477 / NRRL B-23932 / Pf-5).